The primary structure comprises 485 residues: Glycogen synthase (485 aa).

K15 lines the ADP-alpha-D-glucose pocket.

It belongs to the glycosyltransferase 1 family. Bacterial/plant glycogen synthase subfamily.

The enzyme catalyses [(1-&gt;4)-alpha-D-glucosyl](n) + ADP-alpha-D-glucose = [(1-&gt;4)-alpha-D-glucosyl](n+1) + ADP + H(+). It functions in the pathway glycan biosynthesis; glycogen biosynthesis. In terms of biological role, synthesizes alpha-1,4-glucan chains using ADP-glucose. The polypeptide is Glycogen synthase (Francisella philomiragia subsp. philomiragia (strain ATCC 25017 / CCUG 19701 / FSC 153 / O#319-036)).